The chain runs to 482 residues: Membrane-bound lytic murein transglycosylase F (482 aa).

An N-terminal signal peptide occupies residues 1 to 18 (MKGLFLRIITALALLFWA). The non-LT domain stretch occupies residues 19-267 (IDMVFPWQFL…NLKEKYLGHI (249 aa)). The tract at residues 268–482 (SQFDYVDTRS…NLEEIKENED (215 aa)) is LT domain. Glu-312 is an active-site residue. The span at 457-470 (ENQTTNDNANNESA) shows a compositional bias: polar residues. Positions 457-482 (ENQTTNDNANNESAVKNLEEIKENED) are disordered. A compositionally biased stretch (basic and acidic residues) spans 473–482 (NLEEIKENED).

In the N-terminal section; belongs to the bacterial solute-binding protein 3 family. The protein in the C-terminal section; belongs to the transglycosylase Slt family.

The protein localises to the cell outer membrane. The catalysed reaction is Exolytic cleavage of the (1-&gt;4)-beta-glycosidic linkage between N-acetylmuramic acid (MurNAc) and N-acetylglucosamine (GlcNAc) residues in peptidoglycan, from either the reducing or the non-reducing ends of the peptidoglycan chains, with concomitant formation of a 1,6-anhydrobond in the MurNAc residue.. In terms of biological role, murein-degrading enzyme that degrades murein glycan strands and insoluble, high-molecular weight murein sacculi, with the concomitant formation of a 1,6-anhydromuramoyl product. Lytic transglycosylases (LTs) play an integral role in the metabolism of the peptidoglycan (PG) sacculus. Their lytic action creates space within the PG sacculus to allow for its expansion as well as for the insertion of various structures such as secretion systems and flagella. This is Membrane-bound lytic murein transglycosylase F from Haemophilus influenzae (strain PittGG).